Reading from the N-terminus, the 210-residue chain is Protein-methionine-sulfoxide reductase heme-binding subunit MsrQ (210 aa).

4 helical membrane-spanning segments follow: residues 15 to 35 (DTLVYGLVWLACFAPLAWLAW), 89 to 109 (LFAFAYVALHLLAYVGIDLFF), 122 to 142 (PFITLGMLGFMLLIPLAVTST), and 160 to 180 (LVYLIVPLGVAHYYLLVKADH).

The protein belongs to the MsrQ family. As to quaternary structure, heterodimer of a catalytic subunit (MsrP) and a heme-binding subunit (MsrQ). Requires FMN as cofactor. The cofactor is heme b.

The protein resides in the cell inner membrane. Its function is as follows. Part of the MsrPQ system that repairs oxidized periplasmic proteins containing methionine sulfoxide residues (Met-O), using respiratory chain electrons. Thus protects these proteins from oxidative-stress damage caused by reactive species of oxygen and chlorine generated by the host defense mechanisms. MsrPQ is essential for the maintenance of envelope integrity under bleach stress, rescuing a wide series of structurally unrelated periplasmic proteins from methionine oxidation. MsrQ provides electrons for reduction to the reductase catalytic subunit MsrP, using the quinone pool of the respiratory chain. In Caulobacter vibrioides (strain ATCC 19089 / CIP 103742 / CB 15) (Caulobacter crescentus), this protein is Protein-methionine-sulfoxide reductase heme-binding subunit MsrQ.